Here is a 457-residue protein sequence, read N- to C-terminus: Probable ubiquitin carboxyl-terminal hydrolase 16 (457 aa).

Residues 34–97 are disordered; it reads VSSPSVPEGT…DGANDFVDED (64 aa). The segment covering 45–67 has biased composition (polar residues); that stretch reads TVLNNPKQSTVSRKSFSAPTSPT. Serine 61 carries the post-translational modification Phosphoserine. Residue threonine 64 is modified to Phosphothreonine. Serine 65 is modified (phosphoserine). The USP domain maps to 125-429; the sequence is PGLVNLGNTC…QAYILQYKRK (305 aa). Cysteine 134 serves as the catalytic Nucleophile. The Proton acceptor role is filled by histidine 388. A disordered region spans residues 434-457; sequence SKHKLNTENTVTKTSNKKRRKISF. A compositionally biased stretch (basic residues) spans 448-457; sequence SNKKRRKISF.

It belongs to the peptidase C19 family.

It catalyses the reaction Thiol-dependent hydrolysis of ester, thioester, amide, peptide and isopeptide bonds formed by the C-terminal Gly of ubiquitin (a 76-residue protein attached to proteins as an intracellular targeting signal).. The protein is Probable ubiquitin carboxyl-terminal hydrolase 16 (ubp16) of Schizosaccharomyces pombe (strain 972 / ATCC 24843) (Fission yeast).